A 95-amino-acid chain; its full sequence is Integration host factor subunit beta (95 aa).

The interval 57–76 (APRTGRNPKTGDKVDLEGKY) is disordered. The span at 65-76 (KTGDKVDLEGKY) shows a compositional bias: basic and acidic residues.

It belongs to the bacterial histone-like protein family. As to quaternary structure, heterodimer of an alpha and a beta chain.

In terms of biological role, this protein is one of the two subunits of integration host factor, a specific DNA-binding protein that functions in genetic recombination as well as in transcriptional and translational control. This is Integration host factor subunit beta from Enterobacter sp. (strain 638).